The sequence spans 207 residues: Ribosomal RNA small subunit methyltransferase G (207 aa).

S-adenosyl-L-methionine is bound by residues G75, F80, 126-127 (LE), and R140.

It belongs to the methyltransferase superfamily. RNA methyltransferase RsmG family.

It is found in the cytoplasm. It carries out the reaction guanosine(527) in 16S rRNA + S-adenosyl-L-methionine = N(7)-methylguanosine(527) in 16S rRNA + S-adenosyl-L-homocysteine. Specifically methylates the N7 position of guanine in position 527 of 16S rRNA. In Erythrobacter litoralis (strain HTCC2594), this protein is Ribosomal RNA small subunit methyltransferase G.